Reading from the N-terminus, the 508-residue chain is Cobyric acid synthase (508 aa).

In terms of domain architecture, GATase cobBQ-type spans 255 to 454; that stretch reads ELNIAVLKLP…LHGVFESGPW (200 aa). C336 acts as the Nucleophile in catalysis. The active site involves H446.

This sequence belongs to the CobB/CobQ family. CobQ subfamily.

It participates in cofactor biosynthesis; adenosylcobalamin biosynthesis. Catalyzes amidations at positions B, D, E, and G on adenosylcobyrinic A,C-diamide. NH(2) groups are provided by glutamine, and one molecule of ATP is hydrogenolyzed for each amidation. This chain is Cobyric acid synthase, found in Synechococcus sp. (strain CC9311).